The sequence spans 236 residues: Mitochondrial coenzyme A diphosphatase NUDT8 (236 aa).

The 148-residue stretch at Leu25–Leu172 folds into the Nudix hydrolase domain. Lys70 is subject to N6-succinyllysine. The Nudix box motif lies at Lys70–Gly91. Residues Glu85 and Glu89 each coordinate Mg(2+).

Belongs to the Nudix hydrolase family. Monomer. Requires Mg(2+) as cofactor. Mn(2+) serves as cofactor.

The protein localises to the mitochondrion. The catalysed reaction is an acyl-CoA + H2O = an acyl-4'-phosphopantetheine + adenosine 3',5'-bisphosphate + 2 H(+). It catalyses the reaction CoA + H2O = (R)-4'-phosphopantetheine + adenosine 3',5'-bisphosphate + 2 H(+). The enzyme catalyses acetyl-CoA + H2O = S-acetyl-4'-phosphopantetheine + adenosine 3',5'-bisphosphate + 2 H(+). It carries out the reaction butanoyl-CoA + H2O = S-butanoyl-4'-phosphopantetheine + adenosine 3',5'-bisphosphate + 2 H(+). The catalysed reaction is hexanoyl-CoA + H2O = hexanoyl-4'-phosphopantetheine + adenosine 3',5'-bisphosphate + 2 H(+). It catalyses the reaction octanoyl-CoA + H2O = S-octanoyl-4'-phosphopantetheine + adenosine 3',5'-bisphosphate + 2 H(+). The enzyme catalyses propanoyl-CoA + H2O = propanoyl-4'-phosphopantetheine + adenosine 3',5'-bisphosphate + 2 H(+). It carries out the reaction malonyl-CoA + H2O = malonyl-4'-phosphopantetheine + adenosine 3',5'-bisphosphate + 2 H(+). The catalysed reaction is succinyl-CoA + H2O = succinyl-4'-phosphopantetheine + adenosine 3',5'-bisphosphate + 2 H(+). It catalyses the reaction a 5'-end CoA-ribonucleoside in mRNA + H2O = a 5'-end phospho-adenosine-phospho-ribonucleoside in mRNA + (R)-4'-phosphopantetheine + 2 H(+). In terms of biological role, acyl-CoA diphosphatase that mediates the hydrolysis of a wide range of CoA and CoA esters yielding 3',5'-ADP and the corresponding 4'-phosphopantetheine derivative as products. Hydrolyzes short- and medium-chain acyl-CoAs, exhibiting the highest activity toward free CoA, hexanoyl-CoA, and octanoyl-CoA and the lowest activity against acetyl-CoA. Exhibits decapping activity towards dpCoA-capped RNAs in vitro. In Homo sapiens (Human), this protein is Mitochondrial coenzyme A diphosphatase NUDT8 (NUDT8).